The primary structure comprises 336 residues: UbiA prenyltransferase domain-containing protein 1 (336 aa).

The disordered stretch occupies residues 1–22 (MQEMKPAALSGSNGLNGASGSS). The segment covering 7–22 (AALSGSNGLNGASGSS) has biased composition (low complexity). 7 helical membrane passes run 79–99 (LLLLLVCAVAVLLVHGAGNLV), 129–149 (VVMFGAVLYSAGCLCATLLYF), 158–178 (LALIYFGGLSSSFLYTGGIGL), 180–200 (YVALGDVVILITFGPLAVMFA), 201–221 (HAVQVGYLSVLPLVYAVPLAL), 254–274 (LSYVIYNLLLFVPYLLFCILA), and 315–335 (LLMGLFYVFGIILAPQGSLPL).

This sequence belongs to the UbiA prenyltransferase family.

The protein resides in the endoplasmic reticulum membrane. The protein localises to the golgi apparatus membrane. It is found in the mitochondrion membrane. It carries out the reaction menadiol + (2E,6E,10E)-geranylgeranyl diphosphate = menaquinol-4 + diphosphate. It catalyses the reaction all-trans-decaprenyl diphosphate + 4-hydroxybenzoate = 4-hydroxy-3-(all-trans-decaprenyl)benzoate + diphosphate. Its pathway is quinol/quinone metabolism; menaquinone biosynthesis. The protein operates within cofactor biosynthesis; ubiquinone biosynthesis. In terms of biological role, prenyltransferase that mediates the formation of menaquinone-4 (MK-4) and coenzyme Q10. MK-4 is a vitamin K2 isoform required for endothelial cell development. Mediates the conversion of phylloquinone (PK) into MK-4, probably by cleaving the side chain of phylloquinone (PK) to release 2-methyl-1,4-naphthoquinone (menadione; K3) and then prenylating it with geranylgeranyl pyrophosphate (GGPP) to form MK-4. Also plays a role in cardiovascular development independently of MK-4 biosynthesis, by acting as a coenzyme Q10 biosynthetic enzyme: coenzyme Q10, also named ubiquinone, plays an important antioxidant role in the cardiovascular system. Mediates biosynthesis of coenzyme Q10 in the Golgi membrane, leading to protect cardiovascular tissues from nos3/eNOS-dependent oxidative stress. The sequence is that of UbiA prenyltransferase domain-containing protein 1 (ubiad1) from Danio rerio (Zebrafish).